Reading from the N-terminus, the 517-residue chain is Crotonobetaine/carnitine--CoA ligase (517 aa).

It belongs to the ATP-dependent AMP-binding enzyme family.

The enzyme catalyses 4-(trimethylamino)butanoate + ATP + CoA = 4-(trimethylamino)butanoyl-CoA + AMP + diphosphate. It carries out the reaction crotonobetaine + ATP + CoA = crotonobetainyl-CoA + AMP + diphosphate. It catalyses the reaction (R)-carnitine + ATP + CoA = (R)-carnitinyl-CoA + AMP + diphosphate. Its pathway is amine and polyamine metabolism; carnitine metabolism. Functionally, catalyzes the transfer of CoA to carnitine, generating the initial carnitinyl-CoA needed for the CaiB reaction cycle. Also has activity toward crotonobetaine and gamma-butyrobetaine. The sequence is that of Crotonobetaine/carnitine--CoA ligase from Salmonella typhi.